A 95-amino-acid polypeptide reads, in one-letter code: Aspartyl/glutamyl-tRNA(Asn/Gln) amidotransferase subunit C (95 aa).

This sequence belongs to the GatC family. As to quaternary structure, heterotrimer of A, B and C subunits.

The catalysed reaction is L-glutamyl-tRNA(Gln) + L-glutamine + ATP + H2O = L-glutaminyl-tRNA(Gln) + L-glutamate + ADP + phosphate + H(+). The enzyme catalyses L-aspartyl-tRNA(Asn) + L-glutamine + ATP + H2O = L-asparaginyl-tRNA(Asn) + L-glutamate + ADP + phosphate + 2 H(+). Its function is as follows. Allows the formation of correctly charged Asn-tRNA(Asn) or Gln-tRNA(Gln) through the transamidation of misacylated Asp-tRNA(Asn) or Glu-tRNA(Gln) in organisms which lack either or both of asparaginyl-tRNA or glutaminyl-tRNA synthetases. The reaction takes place in the presence of glutamine and ATP through an activated phospho-Asp-tRNA(Asn) or phospho-Glu-tRNA(Gln). This Nitrosomonas europaea (strain ATCC 19718 / CIP 103999 / KCTC 2705 / NBRC 14298) protein is Aspartyl/glutamyl-tRNA(Asn/Gln) amidotransferase subunit C.